The following is an 80-amino-acid chain: Acyl carrier protein (80 aa).

The Carrier domain occupies 4–79; it reads DATLEKVRSI…DAVKYIEDKQ (76 aa). Serine 39 carries the post-translational modification O-(pantetheine 4'-phosphoryl)serine.

This sequence belongs to the acyl carrier protein (ACP) family. In terms of processing, 4'-phosphopantetheine is transferred from CoA to a specific serine of apo-ACP by AcpS. This modification is essential for activity because fatty acids are bound in thioester linkage to the sulfhydryl of the prosthetic group.

The protein resides in the cytoplasm. It functions in the pathway lipid metabolism; fatty acid biosynthesis. Functionally, carrier of the growing fatty acid chain in fatty acid biosynthesis. The chain is Acyl carrier protein from Prochlorococcus marinus (strain MIT 9211).